Consider the following 890-residue polypeptide: Protein translocase subunit SecA (890 aa).

Residues Gln-85, 103 to 107 (GEGKT), and Asp-491 contribute to the ATP site.

The protein belongs to the SecA family. Monomer and homodimer. Part of the essential Sec protein translocation apparatus which comprises SecA, SecYEG and auxiliary proteins SecDF. Other proteins may also be involved.

It localises to the cell membrane. Its subcellular location is the cytoplasm. It catalyses the reaction ATP + H2O + cellular proteinSide 1 = ADP + phosphate + cellular proteinSide 2.. In terms of biological role, part of the Sec protein translocase complex. Interacts with the SecYEG preprotein conducting channel. Has a central role in coupling the hydrolysis of ATP to the transfer of proteins into and across the cell membrane, serving as an ATP-driven molecular motor driving the stepwise translocation of polypeptide chains across the membrane. The polypeptide is Protein translocase subunit SecA (Mycoplasmoides gallisepticum (strain R(low / passage 15 / clone 2)) (Mycoplasma gallisepticum)).